We begin with the raw amino-acid sequence, 435 residues long: MINKTLHTKHTLLGLLAMAVLMIPVWSQAKVQMLDRIVAVVNDGAIMASELDERINTIALQFQEKGQQLPSPAILREQVLDRMILERLQLQLAERAGIKVDEASLNEALAGIARQNDMSLEDFAATLREDGYSWTQFREQIRQDMVISRLQQRSVASRIQITDREVDRFLSSELGKQMFQEDFRLGHILIRVPSEARPQQISQARAKAKEIIERLEAGSDFQQLAIALSDGPNALEGGDLGWRPAAQWPTLFAENAINLKKGEFSQPLRSGAGFHILKMIDRKGGAEKVVTQYHVRHVLIKADALTSAEQAQQRAIRLHDEVAAGKRQFKETAAEFSDDPGSARNGGELGWVNKGEMVPEFEQVMLNTPVGELSPVFESQFGWHFLRVDDIRDADMSTEFRRMQATQALQKRRFEEELETWVQEKRSESYVDIRL.

Residues 1–29 form the signal peptide; sequence MINKTLHTKHTLLGLLAMAVLMIPVWSQA. 2 consecutive PpiC domains span residues 180–281 and 290–390; these read QEDF…KMID and VTQY…RVDD.

Its subcellular location is the periplasm. The enzyme catalyses [protein]-peptidylproline (omega=180) = [protein]-peptidylproline (omega=0). Functionally, chaperone involved in the correct folding and assembly of outer membrane proteins. Recognizes specific patterns of aromatic residues and the orientation of their side chains, which are found more frequently in integral outer membrane proteins. May act in both early periplasmic and late outer membrane-associated steps of protein maturation. The protein is Chaperone SurA of Alcanivorax borkumensis (strain ATCC 700651 / DSM 11573 / NCIMB 13689 / SK2).